We begin with the raw amino-acid sequence, 753 residues long: Photosystem I P700 chlorophyll a apoprotein A1 (753 aa).

Transmembrane regions (helical) follow at residues 73 to 96 (IFSAHFGHLSIIFVWISGMIFHAA), 159 to 182 (LYSAAIGALVAAVVMMYAGYYHYH), 198 to 222 (MTHHLIVLLGLGNLAWTGHLIHVSL), 294 to 312 (IAHHHLALAVMYIIAGHMY), 349 to 372 (WHAQLAINLATWGSFSIIVAHHMY), 388 to 414 (LNLFVHHMWIGGFLIVGGAAHAAIFMV), 436 to 458 (TIISHLNWVCIFLGFHSFGLYIH), and 534 to 552 (FMIHHIHAFQIHVTVLILI). [4Fe-4S] cluster is bound by residues C576 and C585. The next 2 helical transmembrane spans lie at 592–613 (HIFLGLFWMYNCISIVNFHFFW) and 667–689 (LSAYGILFLGAHFIWAFSLMFLF). Chlorophyll a' is bound at residue H678. Chlorophyll a contacts are provided by M686 and Y694. Position 695 (W695) interacts with phylloquinone. The helical transmembrane segment at 727–747 (AVGLGHYLLGGIVTSWSFYLA) threads the bilayer.

It belongs to the PsaA/PsaB family. The PsaA/B heterodimer binds the P700 chlorophyll special pair and subsequent electron acceptors. PSI consists of a core antenna complex that captures photons, and an electron transfer chain that converts photonic excitation into a charge separation. The cyanobacterial PSI reaction center is composed of one copy each of PsaA,B,C,D,E,F,I,J,K,L,M and X, and forms trimeric complexes. The cofactor is PSI electron transfer chain: 5 chlorophyll a, 1 chlorophyll a', 2 phylloquinones and 3 4Fe-4S clusters. PSI core antenna: 90 chlorophyll a, 22 carotenoids, 3 phospholipids and 1 galactolipid. P700 is a chlorophyll a/chlorophyll a' dimer, A0 is one or more chlorophyll a, A1 is one or both phylloquinones and FX is a shared 4Fe-4S iron-sulfur center..

The protein localises to the cellular thylakoid membrane. It carries out the reaction reduced [plastocyanin] + hnu + oxidized [2Fe-2S]-[ferredoxin] = oxidized [plastocyanin] + reduced [2Fe-2S]-[ferredoxin]. In terms of biological role, psaA and PsaB bind P700, the primary electron donor of photosystem I (PSI), as well as the electron acceptors A0, A1 and FX. PSI is a plastocyanin/cytochrome c6-ferredoxin oxidoreductase, converting photonic excitation into a charge separation, which transfers an electron from the donor P700 chlorophyll pair to the spectroscopically characterized acceptors A0, A1, FX, FA and FB in turn. Oxidized P700 is reduced on the lumenal side of the thylakoid membrane by plastocyanin or cytochrome c6. The chain is Photosystem I P700 chlorophyll a apoprotein A1 from Acaryochloris marina (strain MBIC 11017).